A 177-amino-acid chain; its full sequence is Large ribosomal subunit protein uL6 (177 aa).

It belongs to the universal ribosomal protein uL6 family. In terms of assembly, part of the 50S ribosomal subunit.

In terms of biological role, this protein binds to the 23S rRNA, and is important in its secondary structure. It is located near the subunit interface in the base of the L7/L12 stalk, and near the tRNA binding site of the peptidyltransferase center. The sequence is that of Large ribosomal subunit protein uL6 from Shewanella denitrificans (strain OS217 / ATCC BAA-1090 / DSM 15013).